The following is a 553-amino-acid chain: Capsid protein VP1 (553 aa).

It belongs to the microviridae F protein family.

It is found in the virion. It localises to the host cytoplasm. Assembles to form an icosahedral capsid with a T=1 symmetry. This chain is Capsid protein VP1, found in Spiroplasma virus 4 (SpV4).